Reading from the N-terminus, the 276-residue chain is 4-deoxy-L-threo-5-hexosulose-uronate ketol-isomerase (276 aa).

Zn(2+)-binding residues include His-194, His-196, Glu-201, and His-243.

This sequence belongs to the KduI family. Requires Zn(2+) as cofactor.

The enzyme catalyses 5-dehydro-4-deoxy-D-glucuronate = 3-deoxy-D-glycero-2,5-hexodiulosonate. The protein operates within glycan metabolism; pectin degradation; 2-dehydro-3-deoxy-D-gluconate from pectin: step 4/5. Functionally, catalyzes the isomerization of 5-dehydro-4-deoxy-D-glucuronate to 3-deoxy-D-glycero-2,5-hexodiulosonate. This chain is 4-deoxy-L-threo-5-hexosulose-uronate ketol-isomerase, found in Lachnoclostridium phytofermentans (strain ATCC 700394 / DSM 18823 / ISDg) (Clostridium phytofermentans).